The sequence spans 174 residues: Large ribosomal subunit protein uL10 (174 aa).

It belongs to the universal ribosomal protein uL10 family. As to quaternary structure, part of the ribosomal stalk of the 50S ribosomal subunit. The N-terminus interacts with L11 and the large rRNA to form the base of the stalk. The C-terminus forms an elongated spine to which L12 dimers bind in a sequential fashion forming a multimeric L10(L12)X complex.

Functionally, forms part of the ribosomal stalk, playing a central role in the interaction of the ribosome with GTP-bound translation factors. The sequence is that of Large ribosomal subunit protein uL10 from Pelobacter propionicus (strain DSM 2379 / NBRC 103807 / OttBd1).